The chain runs to 90 residues: Co-chaperonin GroES (90 aa).

This sequence belongs to the GroES chaperonin family. In terms of assembly, heptamer of 7 subunits arranged in a ring. Interacts with the chaperonin GroEL.

The protein resides in the cytoplasm. Together with the chaperonin GroEL, plays an essential role in assisting protein folding. The GroEL-GroES system forms a nano-cage that allows encapsulation of the non-native substrate proteins and provides a physical environment optimized to promote and accelerate protein folding. GroES binds to the apical surface of the GroEL ring, thereby capping the opening of the GroEL channel. This chain is Co-chaperonin GroES, found in Bacteroides fragilis (strain ATCC 25285 / DSM 2151 / CCUG 4856 / JCM 11019 / LMG 10263 / NCTC 9343 / Onslow / VPI 2553 / EN-2).